A 128-amino-acid chain; its full sequence is Glycine cleavage system H protein (128 aa).

A Lipoyl-binding domain is found at 24-106; that stretch reads VYSVGITEHA…YTDGWLFSIK (83 aa). Lysine 65 carries the N6-lipoyllysine modification.

It belongs to the GcvH family. The glycine cleavage system is composed of four proteins: P, T, L and H. The cofactor is (R)-lipoate.

Its function is as follows. The glycine cleavage system catalyzes the degradation of glycine. The H protein shuttles the methylamine group of glycine from the P protein to the T protein. The polypeptide is Glycine cleavage system H protein (Yersinia enterocolitica serotype O:8 / biotype 1B (strain NCTC 13174 / 8081)).